A 135-amino-acid polypeptide reads, in one-letter code: Putative pre-16S rRNA nuclease (135 aa).

It belongs to the YqgF nuclease family.

Its subcellular location is the cytoplasm. Functionally, could be a nuclease involved in processing of the 5'-end of pre-16S rRNA. The chain is Putative pre-16S rRNA nuclease from Buchnera aphidicola subsp. Acyrthosiphon pisum (strain 5A).